Consider the following 593-residue polypeptide: High affinity cGMP-specific 3',5'-cyclic phosphodiesterase 9A (593 aa).

The interval 87–141 (SAGVEDKRTTSRGQSAERPLRDRRVVGLEQPRREGAFESGQVEPRPREPQGCYQE) is disordered. A compositionally biased stretch (basic and acidic residues) spans 104-122 (RPLRDRRVVGLEQPRREGA). Residues 236–557 (PRRDVPTYPK…DRYEELKRID (322 aa)) form the PDEase domain. His312 (proton donor) is an active-site residue. 312 to 316 (HNFRH) serves as a coordination point for 3',5'-cyclic GMP. Residues His316, His352, and Asp353 each contribute to the Zn(2+) site. 3',5'-cyclic GMP is bound at residue Asp353. Asp353 serves as a coordination point for Mg(2+). The residue at position 379 (Ser379) is a Phosphoserine. 3',5'-cyclic GMP contacts are provided by residues Asp462, Tyr484, and 512–513 (AQ). Zn(2+) is bound at residue Asp462. The tract at residues 564–593 (QKKTDSLTSGATEKSRERSRDVKNSEGDCA) is disordered. The segment covering 576–593 (EKSRERSRDVKNSEGDCA) has biased composition (basic and acidic residues).

This sequence belongs to the cyclic nucleotide phosphodiesterase family. PDE9 subfamily. As to quaternary structure, homodimer. Requires Zn(2+) as cofactor. The cofactor is Mg(2+). In terms of tissue distribution, expressed in all tissues examined (testis, brain, small intestine, skeletal muscle, heart, lung, thymus, spleen, placenta, kidney, liver, pancreas, ovary and prostate) except blood. Highest levels in brain, heart, kidney, spleen, prostate and colon. Isoform PDE9A12 is found in prostate. In brain, present in the cortex, cerebellum, and subiculum (at protein level). In heart, primarily localizes to myocytes.

It is found in the cell projection. It localises to the ruffle membrane. The protein localises to the cytoplasm. The protein resides in the perinuclear region. Its subcellular location is the golgi apparatus. It is found in the endoplasmic reticulum. It localises to the cell membrane. The protein localises to the sarcolemma. The enzyme catalyses 3',5'-cyclic GMP + H2O = GMP + H(+). It participates in purine metabolism; 3',5'-cyclic GMP degradation; GMP from 3',5'-cyclic GMP: step 1/1. Its activity is regulated as follows. Inhibited by zaprinast; inhibitor is however not specific to PDE9A. Specifically inhibited by BAY-73-6691 (1-(2-chlorophenyl)-6-((2R)-3,3,3- trifluoro-2-methylpropyl)-1,5-dihydro-4H-pyrazolo(3,4-d)pyrimidine-4-one). BAY-73-9961 has two enantiomers, (R) and (S), due to the presence of a chiral center, and both forms vary in their pattern of interaction. Specifically inhibited by PF-4181366 (4H-Pyrazolo[3,4-d]pyrimidin-4-one, 1- cyclopentyl-1,5-dihydro-6-[(3S,4S)-4-methyl- 1-(6-quinoxalinylmethyl)-3-pyrrolidinyl]-one). Specifically inhibited by PF-4449613 ((R)-6-(1-(3-phenoxyazetidin-1-yl)ethyl)-1-(tetrahydro-2H-pyran-4-yl)-1H-pyrazolo[3,4-d]pyrimidin- 4(5H)-one). Specifically inhibited by inhibitor 28 (2-((1-(2-Chlorophenyl)-4-hydroxy-1Hpyrazolo[ 3,4-d]pyrimidin-6-yl)amino)-N-(4- methoxyphenyl)propanamide): inhibitor forms a hydrogen bond with Tyr-484 and Gln-513. Specifically inhibited by 1-Cyclopentyl-6-[(1r)-1-(3-phenoxyazetidin- 1-Yl)ethyl]-1,5-dihydro-4h-pyrazolo[3,4-D] pyrimidin-4-one: inhibitor forms a hydrogen bond with Tyr-484 and Gln-513. Functionally, specifically hydrolyzes the second messenger cGMP, which is a key regulator of many important physiological processes. Highly specific: compared to other members of the cyclic nucleotide phosphodiesterase family, has the highest affinity and selectivity for cGMP. Specifically regulates natriuretic-peptide-dependent cGMP signaling in heart, acting as a regulator of cardiac hypertrophy in myocytes and muscle. Does not regulate nitric oxide-dependent cGMP in heart. Additional experiments are required to confirm whether its ability to hydrolyze natriuretic-peptide-dependent cGMP is specific to heart or is a general feature of the protein. In brain, involved in cognitive function, such as learning and long-term memory. The sequence is that of High affinity cGMP-specific 3',5'-cyclic phosphodiesterase 9A from Homo sapiens (Human).